A 119-amino-acid polypeptide reads, in one-letter code: Large ribosomal subunit protein bL20 (119 aa).

This sequence belongs to the bacterial ribosomal protein bL20 family.

In terms of biological role, binds directly to 23S ribosomal RNA and is necessary for the in vitro assembly process of the 50S ribosomal subunit. It is not involved in the protein synthesizing functions of that subunit. The sequence is that of Large ribosomal subunit protein bL20 from Clostridium botulinum (strain ATCC 19397 / Type A).